The following is a 487-amino-acid chain: MLLRGSRLGDISGEVLDFISSRDVDLWIAEADVLVDMAHLLMLYERGLIPREDCARILTALKELLAEGFGVLGEGEDIHEAIEAYVIERVGPAGGRMHTARSRNDEVATCIRIALREQMLGLMDELIQMIDALVRIADETRERIIPGYTHLQHAQPTTLAHHLLAHADALIRDLERFESTYERVNLSPLGAAAFASTGFDIDRYMTCELLGFSGLVENSMDAVSSRDFALEVLSDTSILMINLSRIAEEIILWSTSEFGYVEVNDLFASTSSIMPQKKNPDTAELVRAKSGTAIGSLVGALSICKALPMSYNRDLQELTPHIWRGIGAARSSLRVMRGCVSTLRFDFERLERSSTEGFTTATELADSMVRITGIPFRTAHQIVGRLARLPGKPSLEDLDRAAMVVADLRLSQMGFTAEDLERALDPRTNISMRSKPGGPAPEEVSRMLDARKKYLESASSRLAEKRSKVDSAIRRLMEGVDRTVTAT.

This sequence belongs to the lyase 1 family. Argininosuccinate lyase subfamily.

It is found in the cytoplasm. It carries out the reaction 2-(N(omega)-L-arginino)succinate = fumarate + L-arginine. It participates in amino-acid biosynthesis; L-arginine biosynthesis; L-arginine from L-ornithine and carbamoyl phosphate: step 3/3. The sequence is that of Argininosuccinate lyase from Methanothrix thermoacetophila (strain DSM 6194 / JCM 14653 / NBRC 101360 / PT) (Methanosaeta thermophila).